The following is a 150-amino-acid chain: Large ribosomal subunit protein bL9 (150 aa).

The protein belongs to the bacterial ribosomal protein bL9 family.

Functionally, binds to the 23S rRNA. The polypeptide is Large ribosomal subunit protein bL9 (Lactiplantibacillus plantarum (strain ATCC BAA-793 / NCIMB 8826 / WCFS1) (Lactobacillus plantarum)).